Reading from the N-terminus, the 1483-residue chain is Cystic fibrosis transmembrane conductance regulator (1483 aa).

The Cytoplasmic segment spans residues 1–77 (MQRSPLEKAS…KLINALRRCF (77 aa)). Residues 78-98 (FWRFAFYGILLYLGEVTKAVQ) form a helical membrane-spanning segment. Residues 81 to 365 (FAFYGILLYL…WAVQTWYDSL (285 aa)) form the ABC transmembrane type-1 1 domain. At 99 to 122 (PLLLGRIIASYDPDNKQERSIAIY) the chain is on the extracellular side. Residues 123 to 146 (LAIGLCLLFIMRPLLLHPAIFGLH) form a helical membrane-spanning segment. Residues 147 to 195 (HIGMQIRIAMFSLIYKKTLKLSSRVLDKISIGQLVSLLSNNLNKFDEGL) lie on the Cytoplasmic side of the membrane. The helical transmembrane segment at 196–216 (ALAHFVWIAPLQVTLLMGLLW) threads the bilayer. Over 217-222 (DLLQAS) the chain is Extracellular. A helical membrane pass occupies residues 223–243 (AFCGLAFLIVLALVQAGLGRM). The Cytoplasmic portion of the chain corresponds to 244-298 (IMKYRDQRAGKINERLVITSEVIENIQSVKAYCWEEAMEKIIENIRQTELKLTRK). The chain crosses the membrane as a helical span at residues 299–319 (AAHVRYFNSSAFFFSGFFVVS). Residues 320–339 (LSVLPYALIKTIILRKIFTT) are Extracellular-facing. Residues 340 to 358 (ISFCIVLRMAVTRQFPWAV) form a helical membrane-spanning segment. Residues 359–859 (QTWYDSLGAI…YLRYITVHKN (501 aa)) lie on the Cytoplasmic side of the membrane. Residues tryptophan 401, serine 434, 458–465 (GSTGAGKT), and glutamine 493 each bind ATP. An ABC transporter 1 domain is found at 423–646 (NGDNSLFFSN…RPDFSSKLMG (224 aa)). Residue cysteine 524 is the site of S-palmitoyl cysteine attachment. Residues serine 549 and serine 660 each carry the phosphoserine modification. A disordered R region region spans residues 654-832 (SPERRNSIIT…EEINEEDLKE (179 aa)). Position 670 is a phosphoserine; by PKA (serine 670). Position 686 is a phosphoserine (serine 686). Residue lysine 688 forms a Glycyl lysine isopeptide (Lys-Gly) (interchain with G-Cter in ubiquitin) linkage. Serine 700 and serine 712 each carry phosphoserine. The residue at position 717 (threonine 717) is a Phosphothreonine. 5 positions are modified to phosphoserine: serine 737, serine 768, serine 791, serine 796, and serine 814. A helical transmembrane segment spans residues 860–880 (LIFVLIWCLVIFLAEVAVSLV). The 297-residue stretch at 860–1156 (LIFVLIWCLV…AVNSSIEVDS (297 aa)) folds into the ABC transmembrane type-1 2 domain. Residues 881–919 (VLWILRNLSSQDKGNSTQSVNSSYAVIFTSTSAYYIFYI) lie on the Extracellular side of the membrane. Asparagine 887, asparagine 895, and asparagine 901 each carry an N-linked (GlcNAc...) asparagine glycan. The chain crosses the membrane as a discontinuously helical span at residues 920-940 (YVGVADTLLALGLFRGLPLVH). Over 941–991 (TLITVSKILHHKMLHSVLQAPMSTLNTLKAGGILNRFSKDIAILDDLLPLT) the chain is Cytoplasmic. The helical transmembrane segment at 992–1012 (IFDFIQLLLIVIGAVAVVSVL) threads the bilayer. Residues 1013–1014 (QP) are Extracellular-facing. Residues 1015-1035 (YIFLATVPVIAAFIILRAYFL) form a helical membrane-spanning segment. Residues 1036–1096 (HTSQQLKQLE…TANWFLYLST (61 aa)) are Cytoplasmic-facing. A helical membrane pass occupies residues 1097–1117 (LRWFQMRMEIIFVIFFIAVTF). The Extracellular segment spans residues 1118-1131 (ISILTTGEGEGTVG). Residues 1132-1152 (IILTLAMNIMGTLQWAVNSSI) traverse the membrane as a helical segment. The Cytoplasmic portion of the chain corresponds to 1153 to 1483 (EVDSLMRSVS…TEDEVQDTRL (331 aa)). Positions 1213–1446 (MTVKDLTAKY…RSAFRQAIGP (234 aa)) constitute an ABC transporter 2 domain. ATP contacts are provided by residues tyrosine 1222 and 1247-1254 (GRTGSGKS). The segment at 1389 to 1483 (RTLKQAFADC…TEDEVQDTRL (95 aa)) is interaction with GORASP2. Cysteine 1398 carries S-palmitoyl cysteine lipidation. The segment at 1444-1483 (IGPPERPGLLPHRLSSRQRSPSRIAALKEETEDEVQDTRL) is disordered. Phosphoserine is present on serine 1459. The span at 1473-1483 (ETEDEVQDTRL) shows a compositional bias: acidic residues. The short motif at 1481–1483 (TRL) is the PDZ-binding element.

This sequence belongs to the ABC transporter superfamily. ABCC family. CFTR transporter (TC 3.A.1.202) subfamily. Monomer; does not require oligomerization for channel activity. May form oligomers in the membrane. Interacts with SLC26A3, SLC26A6 and NHERF1. Interacts with SHANK2. Interacts with MYO6. Interacts (via C-terminus) with GOPC (via PDZ domain); this promotes CFTR internalization and thereby decreases channel activity. Interacts with SLC4A7 through NHERF1. Found in a complex with MYO5B and RAB11A. Interacts with ANO1. Interacts with SLC26A8. Interacts with AHCYL1; the interaction increases CFTR activity. Interacts with CSE1L. The core-glycosylated form interacts with GORASP2 (via PDZ GRASP-type 1 domain) in respone to ER stress. Interacts with MARCHF2; the interaction leads to CFTR ubiqtuitination and degradation. Interacts with ADGRG2. In terms of processing, N-glycosylated. Post-translationally, phosphorylated; cAMP treatment promotes phosphorylation and activates the channel. Dephosphorylation decreases the ATPase activity (in vitro). Phosphorylation at PKA sites activates the channel. Phosphorylation at PKC sites enhances the response to phosphorylation by PKA. Phosphorylated by AMPK; this inhibits channel activity. Ubiquitinated, leading to its degradation in the lysosome. Deubiquitination by USP10 in early endosomes enhances its endocytic recycling to the cell membrane. Ubiquitinated by RNF185 during ER stress. Ubiquitinated by MARCHF2.

It is found in the apical cell membrane. The protein resides in the early endosome membrane. Its subcellular location is the cell membrane. The protein localises to the recycling endosome membrane. It localises to the endoplasmic reticulum membrane. It is found in the nucleus. The catalysed reaction is ATP + H2O + closed Cl(-) channel = ADP + phosphate + open Cl(-) channel.. It catalyses the reaction chloride(in) = chloride(out). The enzyme catalyses hydrogencarbonate(in) = hydrogencarbonate(out). It carries out the reaction ATP + H2O = ADP + phosphate + H(+). Functionally, epithelial ion channel that plays an important role in the regulation of epithelial ion and water transport and fluid homeostasis. Mediates the transport of chloride ions across the cell membrane. Possesses an intrinsic ATPase activity and utilizes ATP to gate its channel; the passive flow of anions through the channel is gated by cycles of ATP binding and hydrolysis by the ATP-binding domains. The ion channel is also permeable to HCO(3)(-); selectivity depends on the extracellular chloride concentration. Exerts its function also by modulating the activity of other ion channels and transporters. Contributes to the regulation of the pH and the ion content of the epithelial fluid layer. Modulates the activity of the epithelial sodium channel (ENaC) complex, in part by regulating the cell surface expression of the ENaC complex. May regulate bicarbonate secretion and salvage in epithelial cells by regulating the transporter SLC4A7. Can inhibit the chloride channel activity of ANO1. Plays a role in the chloride and bicarbonate homeostasis during sperm epididymal maturation and capacitation. In Canis lupus familiaris (Dog), this protein is Cystic fibrosis transmembrane conductance regulator.